The primary structure comprises 942 residues: Protein ZDS2 (942 aa).

Residues 1 to 28 (MVLMEDMQNKDGHNTVENSSGGTDSNNN) are disordered. Polar residues predominate over residues 15 to 28 (TVENSSGGTDSNNN). A Phosphoserine modification is found at Ser-50. 5 disordered regions span residues 91–142 (SRNS…DDSI), 483–541 (SQES…NSSN), 617–654 (VVSS…KNSL), 682–728 (VKKE…DIDT), and 788–817 (SRDT…ISTL). Positions 99–122 (SSKESLQESLHEENIIRSEQKEEQ) are enriched in basic and acidic residues. Residues 123 to 134 (GSEDNDAYEEGD) show a composition bias toward acidic residues. Low complexity-rich tracts occupy residues 483 to 497 (SQES…SNNS), 518 to 541 (SSSE…NSSN), and 617 to 627 (VVSSSESQPSK). Basic residues predominate over residues 682-704 (VKKELKKKASHSSLSKFRKSPKK). The span at 807–816 (TSPTAPQIST) shows a compositional bias: polar residues.

It to yeast ZDS1/NRC1/CES1. Interacts with SKG6.

In terms of biological role, acts as a negative regulator of polarized growth via an alternative mechanism to ZDS1. In heat-stressed cells appears to play a role in localizing BCY1 to the cytoplasm. Seems to interact with, and down-regulate, CDC42. Also acts as a suppressor of PKC1. May act as an integration point for distinct signaling pathways helping to maintain a balance among these different pathways. The chain is Protein ZDS2 (ZDS2) from Saccharomyces cerevisiae (strain ATCC 204508 / S288c) (Baker's yeast).